Reading from the N-terminus, the 563-residue chain is Pyruvate decarboxylase isozyme 2 (563 aa).

Positions 28, 115, 157, and 224 each coordinate pyruvate. Residues Thr390 and 413–415 (GSI) each bind thiamine diphosphate. Position 444 (Asp444) interacts with Mg(2+). Residues 445 to 446 (GS) and 471 to 476 (NNGYTI) contribute to the thiamine diphosphate site. Mg(2+) is bound by residues Asn471 and Gly473. Residue Glu477 coordinates pyruvate.

This sequence belongs to the TPP enzyme family. In terms of assembly, homotetramer. The cofactor is Mg(2+). It depends on thiamine diphosphate as a cofactor.

It is found in the cytoplasm. Its subcellular location is the nucleus. It carries out the reaction pyruvate + H(+) = acetaldehyde + CO2. The enzyme catalyses 3-methyl-2-oxobutanoate + H(+) = 2-methylpropanal + CO2. It catalyses the reaction (S)-3-methyl-2-oxopentanoate + H(+) = 2-methylbutanal + CO2. The catalysed reaction is indole-3-pyruvate + H(+) = indole-3-acetaldehyde + CO2. It carries out the reaction 3-phenylpyruvate + H(+) = 2-phenylacetaldehyde + CO2. The enzyme catalyses 2-oxobutanoate + H(+) = propanal + CO2. It catalyses the reaction 2-oxopentanoate + H(+) = butanal + CO2. The catalysed reaction is 2 acetaldehyde = acetoin. It carries out the reaction acetaldehyde + pyruvate + H(+) = acetoin + CO2. It functions in the pathway fermentation; ethanol fermentation. It participates in amino-acid degradation; Ehrlich pathway. Its activity is regulated as follows. Allosterically activated by its substrate, pyruvate. Second most abundant of three pyruvate decarboxylases (PDC1, PDC5, PDC6) implicated in the nonoxidative conversion of pyruvate to acetaldehyde and carbon dioxide during alcoholic fermentation. Most of the produced acetaldehyde is subsequently reduced to ethanol, but some is required for cytosolic acetyl-CoA production for biosynthetic pathways. The enzyme is also one of five 2-oxo acid decarboxylases (PDC1, PDC5, PDC6, ARO10, and THI3) able to decarboxylate more complex 2-oxo acids (alpha-keto-acids) than pyruvate, which seem mainly involved in amino acid catabolism. Here the enzyme catalyzes the decarboxylation of amino acids, which, in a first step, have been transaminated to the corresponding 2-oxo acids. In a third step, the resulting aldehydes are reduced to alcohols, collectively referred to as fusel oils or alcohols. Its preferred substrates are the transaminated amino acids derived from threonine (2-oxobutanoate), norvaline (2-oxopentanoate), valine (3-methyl-2-oxobutanoate, also alpha-keto-isovalerate), isoleucine ((3S)-3-methyl-2-oxopentanoate, also alpha-keto-beta-methylvalerate), phenylalanine (phenylpyruvate), and tryptophan (3-(indol-3-yl)pyruvate), whereas transaminated leucine is no substrate. In a side-reaction the carbanionic intermediate (or active aldehyde) generated by decarboxylation or by activation of an aldehyde can react with an aldehyde via condensation (or carboligation) yielding a 2-hydroxy ketone, collectively called acyloins. This chain is Pyruvate decarboxylase isozyme 2 (PDC5), found in Saccharomyces cerevisiae (strain ATCC 204508 / S288c) (Baker's yeast).